The sequence spans 348 residues: Guanine nucleotide-binding protein alpha-13 subunit (348 aa).

The N-myristoyl glycine moiety is linked to residue glycine 2. Cysteine 3 is lipidated: S-palmitoyl cysteine. The region spanning 34 to 348 is the G-alpha domain; sequence SHIRLLLLGS…VFKDIAKRKK (315 aa). Residues 37–50 form a G1 motif region; sequence RLLLLGSAESGKTT. GTP is bound by residues 42–49, 176–182, 201–205, 270–273, and alanine 326; these read GSAESGKT, IMAYVPT, DIGGQ, and NEID. Positions 174-182 are G2 motif; sequence DLIMAYVPT. Threonine 182 serves as a coordination point for Mg(2+). The tract at residues 197 to 206 is G3 motif; it reads FQLFDIGGQK. The segment at 266–273 is G4 motif; it reads YLFLNEID. A G5 motif region spans residues 324 to 329; that stretch reads CIAIDT.

The protein belongs to the G-alpha family. As to quaternary structure, g proteins are composed of 3 units; alpha, beta and gamma. The alpha chain contains the guanine nucleotide binding site.

Guanine nucleotide-binding proteins (G proteins) are involved as modulators or transducers in various transmembrane signaling systems. The chain is Guanine nucleotide-binding protein alpha-13 subunit (gpa-13) from Caenorhabditis elegans.